The primary structure comprises 941 residues: 26S proteasome regulatory subunit RPN2 (941 aa).

PC repeat units lie at residues 363–396, 400–437, 442–476, 477–511, 513–546, 547–582, 583–615, 617–651, 652–689, and 695–731; these read SATA…SSRF, GSLY…EDVD, GASL…TSGE, AAAF…GNIT, GLSM…LIRY, GGAF…DVRR, AAVT…AHDR, GAAF…FVRQ, AAMI…KHQE, and GACV…VGLA. A disordered region spans residues 808-854; that stretch reads KARAKKTKKEKDTNEDDKKKKEKDLKKEETKKDDAKKESEAEEDFNK. A compositionally biased stretch (basic and acidic residues) spans 816-854; sequence KEKDTNEDDKKKKEKDLKKEETKKDDAKKESEAEEDFNK.

The protein belongs to the proteasome subunit S1 family.

Acts as a regulatory subunit of the 26S proteasome which is involved in the ATP-dependent degradation of ubiquitinated proteins. This is 26S proteasome regulatory subunit RPN2 (RPN2) from Candida glabrata (strain ATCC 2001 / BCRC 20586 / JCM 3761 / NBRC 0622 / NRRL Y-65 / CBS 138) (Yeast).